The chain runs to 310 residues: Cytochrome f (310 aa).

The N-terminal stretch at 1–27 is a signal peptide; it reads MRRHLSLFLGSLVIGLALLIAPAASWA. Heme contacts are provided by tyrosine 28, cysteine 48, cysteine 51, and histidine 52. The chain crosses the membrane as a helical span at residues 277–297; sequence IYGLLAFFAAVALAQIMLVLK.

The protein belongs to the cytochrome f family. In terms of assembly, the 4 large subunits of the cytochrome b6-f complex are cytochrome b6, subunit IV (17 kDa polypeptide, PetD), cytochrome f and the Rieske protein, while the 4 small subunits are PetG, PetL, PetM and PetN. The complex functions as a dimer. The cofactor is heme.

Its subcellular location is the cellular thylakoid membrane. In terms of biological role, component of the cytochrome b6-f complex, which mediates electron transfer between photosystem II (PSII) and photosystem I (PSI), cyclic electron flow around PSI, and state transitions. The polypeptide is Cytochrome f (Synechococcus sp. (strain CC9605)).